Consider the following 212-residue polypeptide: Transcriptional regulator GfcR (212 aa).

Residues 38–60 are disordered; that stretch reads LVERSGTGTEPDTSDDGGPHDIH.

Belongs to the purine/pyrimidine phosphoribosyltransferase family. GfcR subfamily.

In terms of biological role, DNA-binding transcriptional regulator that functions as a regulator of central sugar catabolic pathways. In Haloarcula marismortui (strain ATCC 43049 / DSM 3752 / JCM 8966 / VKM B-1809) (Halobacterium marismortui), this protein is Transcriptional regulator GfcR.